The sequence spans 2289 residues: Protein Ycf2 (2289 aa).

1643-1650 (GSIGTGRS) is an ATP binding site.

Belongs to the Ycf2 family.

It is found in the plastid. The protein resides in the chloroplast stroma. Probable ATPase of unknown function. Its presence in a non-photosynthetic plant (Epifagus virginiana) and experiments in tobacco indicate that it has an essential function which is probably not related to photosynthesis. This is Protein Ycf2 from Aethionema grandiflorum (Persian stone-cress).